Here is a 109-residue protein sequence, read N- to C-terminus: Ribulose bisphosphate carboxylase small subunit (109 aa).

This sequence belongs to the RuBisCO small chain family. In terms of assembly, heterohexadecamer of 8 large and 8 small subunits.

The protein resides in the carboxysome. In terms of biological role, ruBisCO catalyzes two reactions: the carboxylation of D-ribulose 1,5-bisphosphate, the primary event in carbon dioxide fixation, as well as the oxidative fragmentation of the pentose substrate in the photorespiration process. Both reactions occur simultaneously and in competition at the same active site. Although the small subunit is not catalytic it is essential for maximal activity. This chain is Ribulose bisphosphate carboxylase small subunit, found in Prochlorothrix hollandica.